Here is a 212-residue protein sequence, read N- to C-terminus: Interleukin-6 (212 aa).

Residues 1 to 29 form the signal peptide; sequence MTSFSTSAFRPVAFSLGLLLVMPAAFPAP. Cys72 and Cys78 form a disulfide bridge. Residue Asn73 is glycosylated (N-linked (GlcNAc...) asparagine). At Ser81 the chain carries Phosphoserine. Cys101 and Cys111 are joined by a disulfide. N-linked (GlcNAc...) asparagine glycans are attached at residues Asn160 and Asn172.

It belongs to the IL-6 superfamily. In terms of assembly, component of a hexamer of two molecules each of IL6, IL6R and IL6ST; first binds to IL6R to associate with the signaling subunit IL6ST. Interacts with IL6R (via the N-terminal ectodomain); this interaction may be affected by IL6R-binding with SORL1, hence decreasing IL6 cis signaling. Interacts with SORL1 (via the N-terminal ectodomain); this interaction leads to IL6 internalization and lysosomal degradation. May form a trimeric complex with the soluble SORL1 ectodomain and soluble IL6R receptor; this interaction might stabilize circulating IL6, hence promoting IL6 trans signaling.

Its subcellular location is the secreted. In terms of biological role, cytokine with a wide variety of biological functions in immunity, tissue regeneration, and metabolism. Binds to IL6R, then the complex associates to the signaling subunit IL6ST/gp130 to trigger the intracellular IL6-signaling pathway. The interaction with the membrane-bound IL6R and IL6ST stimulates 'classic signaling', whereas the binding of IL6 and soluble IL6R to IL6ST stimulates 'trans-signaling'. Alternatively, 'cluster signaling' occurs when membrane-bound IL6:IL6R complexes on transmitter cells activate IL6ST receptors on neighboring receiver cells. Functionally, IL6 is a potent inducer of the acute phase response. Rapid production of IL6 contributes to host defense during infection and tissue injury, but excessive IL6 synthesis is involved in disease pathology. In the innate immune response, is synthesized by myeloid cells, such as macrophages and dendritic cells, upon recognition of pathogens through toll-like receptors (TLRs) at the site of infection or tissue injury. In the adaptive immune response, is required for the differentiation of B cells into immunoglobulin-secreting cells. Plays a major role in the differentiation of CD4(+) T cell subsets. Essential factor for the development of T follicular helper (Tfh) cells that are required for the induction of germinal-center formation. Required to drive naive CD4(+) T cells to the Th17 lineage. Also required for proliferation of myeloma cells and the survival of plasmablast cells. Its function is as follows. Acts as an essential factor in bone homeostasis and on vessels directly or indirectly by induction of VEGF, resulting in increased angiogenesis activity and vascular permeability. Induces, through 'trans-signaling' and synergistically with IL1B and TNF, the production of VEGF. Involved in metabolic controls, is discharged into the bloodstream after muscle contraction increasing lipolysis and improving insulin resistance. 'Trans-signaling' in central nervous system also regulates energy and glucose homeostasis. Mediates, through GLP-1, crosstalk between insulin-sensitive tissues, intestinal L cells and pancreatic islets to adapt to changes in insulin demand. Also acts as a myokine. Plays a protective role during liver injury, being required for maintenance of tissue regeneration. Also has a pivotal role in iron metabolism by regulating HAMP/hepcidin expression upon inflammation or bacterial infection. Through activation of IL6ST-YAP-NOTCH pathway, induces inflammation-induced epithelial regeneration. The chain is Interleukin-6 (IL6) from Saimiri sciureus (Common squirrel monkey).